We begin with the raw amino-acid sequence, 538 residues long: Nicotinate phosphoribosyltransferase (538 aa).

Y21 and T210 together coordinate nicotinate. H213 is subject to Phosphohistidine. R318 provides a ligand contact to nicotinate. Position 380 (T380) interacts with 5-phospho-alpha-D-ribose 1-diphosphate.

This sequence belongs to the NAPRTase family. Homodimer. It depends on Mg(2+) as a cofactor. Mn(2+) is required as a cofactor. In terms of processing, transiently phosphorylated on a His residue during the reaction cycle. Phosphorylation strongly increases the affinity for substrates and increases the rate of nicotinate D-ribonucleotide production. Dephosphorylation regenerates the low-affinity form of the enzyme, leading to product release.

Its subcellular location is the cytoplasm. The protein localises to the cytosol. It carries out the reaction nicotinate + 5-phospho-alpha-D-ribose 1-diphosphate + ATP + H2O = nicotinate beta-D-ribonucleotide + ADP + phosphate + diphosphate. It participates in cofactor biosynthesis; NAD(+) biosynthesis; nicotinate D-ribonucleotide from nicotinate: step 1/1. Functionally, catalyzes the first step in the biosynthesis of NAD from nicotinic acid, the ATP-dependent synthesis of beta-nicotinate D-ribonucleotide from nicotinate and 5-phospho-D-ribose 1-phosphate. Helps prevent cellular oxidative stress via its role in NAD biosynthesis. The protein is Nicotinate phosphoribosyltransferase (NAPRT) of Bos taurus (Bovine).